The following is a 928-amino-acid chain: Retinoblastoma-associated protein (928 aa).

The tract at residues 1–42 is disordered; the sequence is MPPKTPRKTAATAAAAAAEPPAPPPPPPPEEDPEQDSGPEDL. N,N-dimethylproline is present on P2. Positions 8 to 19 are enriched in low complexity; it reads KTAATAAAAAAE. Over residues 29–39 the composition is skewed to acidic residues; it reads PEEDPEQDSGP. Position 37 is a phosphoserine (S37). Residue S249 is modified to Phosphoserine; by CDK1. The residue at position 252 (T252) is a Phosphothreonine; by CDK1. T356 carries the phosphothreonine modification. Residue T373 is modified to Phosphothreonine; by CDK1. Residues 373–579 are domain A; sequence TPVRTVMNTI…FDLIKQSKDR (207 aa). The pocket; binds T and E1A stretch occupies residues 373–771; it reads TPVRTVMNTI…QRLKTNILQY (399 aa). S567 bears the Phosphoserine; by CDK2 mark. A spacer region spans residues 580-639; it reads EGPTDHLESACPLNLPLQNNHTAADMYLSPVRSPKKKGSTTRVNSTANAETQATSAFQTQ. A Phosphoserine modification is found at S608. Positions 610-632 are disordered; the sequence is VRSPKKKGSTTRVNSTANAETQA. Phosphoserine; by CHEK2 and CHEK1 is present on S612. Polar residues predominate over residues 619 to 632; sequence TTRVNSTANAETQA. Phosphoserine is present on S624. The tract at residues 640 to 771 is domain B; it reads KPLKSTSLSL…QRLKTNILQY (132 aa). The segment at 763-928 is interaction with LIMD1; that stretch reads RLKTNILQYA…SMDTSNKEEK (166 aa). The interval 771 to 928 is domain C; mediates interaction with E4F1; that stretch reads YASTRPPTLS…SMDTSNKEEK (158 aa). Residues S780, S788, and S795 each carry the phosphoserine modification. S807 carries the post-translational modification Phosphoserine; by CDK1 and CDK3. K810 bears the N6-methyllysine; by SMYD2 mark. Position 811 is a phosphoserine; by CDK1 and CDK3 (S811). Residue T821 is modified to Phosphothreonine; by CDK6. The residue at position 823 (T823) is a Phosphothreonine. T826 bears the Phosphothreonine; by CDK4 mark. T841 is subject to Phosphothreonine. S855 bears the Phosphoserine mark. At K860 the chain carries N6-methyllysine; by SMYD2. The Bipartite nuclear localization signal motif lies at 860 to 876; the sequence is KRSAEGSNPPKPLKKLR. The disordered stretch occupies residues 860 to 928; it reads KRSAEGSNPP…SMDTSNKEEK (69 aa). N6-acetyllysine; by PCAF is present on residues K873 and K874. The segment covering 915–928 has biased composition (basic and acidic residues); it reads KMNDSMDTSNKEEK.

Belongs to the retinoblastoma protein (RB) family. As to quaternary structure, the hypophosphorylated form interacts with and sequesters the E2F1 transcription factor, thereby inhibiting E2F1 transcription. Interacts with heterodimeric E2F/DP transcription factor complexes containing TFDP1 and either E2F1, E2F3, E2F4 or E2F5, or TFDP2 and E2F4. Interacts (when hyperphosphorylated and hypophosphorylated) with PKP3; the interaction inhibits RB1 interaction with and repression of the transcription factor E2F1, potentially via sequestering RB1 to the cytoplasm. The unphosphorylated form interacts with EID1, ARID3B, KDM5A, SUV39H1, MJD2A/JHDM3A and THOC1. Interacts with the N-terminal domain of TAF1. Interacts with SNW1, ATAD5, AATF, DNMT1, LIN9, LMNA, KMT5B, KMT5C, PELP1, UHRF2 and TMPO-alpha. Interacts with GRIP1 and UBR4. Interacts with ARID4A and KDM5B. Interacts with E4F1 and LIMD1. Interacts with SMARCA4/BRG1 and HDAC1. Interacts with PSMA3 and USP4. Interacts (when methylated at Lys-860) with L3MBTL1. Interacts with CHEK2; phosphorylates RB1. Interacts with CDK1 and CDK2. Interacts with PRMT2. Interacts with CEBPA. P-TEFB complex interacts with RB1; promotes phosphorylation of RB1. Interacts with RBBP9; the interaction disrupts RB1 binding to E2F1. Interacts with KAT2B/PCAF and EP300/P300. Interacts with PAX5. Interacts (phosphorylated and unphosphorylated) with BLCAP. May interact with NDC80. In terms of assembly, (Microbial infection) Interacts with adenovirus E1A protein. (Microbial infection) Interacts with HPV E7 protein. As to quaternary structure, (Microbial infection) Interacts with SV40 large T antigen. In terms of assembly, (Microbial infection) Interacts with human cytomegalovirus/HHV-5 proteins UL82 and UL123. (Microbial infection) Interacts with molluscum contagiosum virus protein MC007. In terms of processing, phosphorylated by CDK6 and CDK4, and subsequently by CDK2 at Ser-567 in G1, thereby releasing E2F1 which is then able to activate cell growth. Dephosphorylated at the late M phase. SV40 large T antigen, HPV E7 and adenovirus E1A bind to the underphosphorylated, active form of pRb. Phosphorylation at Thr-821 and Thr-826 promotes interaction between the C-terminal domain C and the Pocket domain, and thereby inhibits interactions with heterodimeric E2F/DP transcription factor complexes. Dephosphorylated at Ser-795 by calcineruin upon calcium stimulation. CDK3/cyclin-C-mediated phosphorylation at Ser-807 and Ser-811 is required for G0-G1 transition. Phosphorylated by CDK1 and CDK2 upon TGFB1-mediated apoptosis. Post-translationally, N-terminus is methylated by METTL11A/NTM1. Monomethylation at Lys-810 by SMYD2 enhances phosphorylation at Ser-807 and Ser-811, and promotes cell cycle progression. Monomethylation at Lys-860 by SMYD2 promotes interaction with L3MBTL1. Acetylated during keratinocyte differentiation. Acetylation at Lys-873 and Lys-874 regulates subcellular localization. Can be deacetylated by SIRT1. In terms of tissue distribution, expressed in the retina. Expressed in foreskin keratinocytes (at protein level).

The protein resides in the nucleus. Its subcellular location is the cytoplasm. In terms of biological role, tumor suppressor that is a key regulator of the G1/S transition of the cell cycle. The hypophosphorylated form binds transcription regulators of the E2F family, preventing transcription of E2F-responsive genes. Both physically blocks E2Fs transactivating domain and recruits chromatin-modifying enzymes that actively repress transcription. Cyclin and CDK-dependent phosphorylation of RB1 induces its dissociation from E2Fs, thereby activating transcription of E2F responsive genes and triggering entry into S phase. RB1 also promotes the G0-G1 transition upon phosphorylation and activation by CDK3/cyclin-C. Directly involved in heterochromatin formation by maintaining overall chromatin structure and, in particular, that of constitutive heterochromatin by stabilizing histone methylation. Recruits and targets histone methyltransferases SUV39H1, KMT5B and KMT5C, leading to epigenetic transcriptional repression. Controls histone H4 'Lys-20' trimethylation. Inhibits the intrinsic kinase activity of TAF1. Mediates transcriptional repression by SMARCA4/BRG1 by recruiting a histone deacetylase (HDAC) complex to the c-FOS promoter. In resting neurons, transcription of the c-FOS promoter is inhibited by BRG1-dependent recruitment of a phospho-RB1-HDAC1 repressor complex. Upon calcium influx, RB1 is dephosphorylated by calcineurin, which leads to release of the repressor complex. Functionally, (Microbial infection) In case of viral infections, interactions with SV40 large T antigen, HPV E7 protein or adenovirus E1A protein induce the disassembly of RB1-E2F1 complex thereby disrupting RB1's activity. This is Retinoblastoma-associated protein (RB1) from Homo sapiens (Human).